Here is a 382-residue protein sequence, read N- to C-terminus: Cytochrome c biogenesis CcmF N-terminal-like mitochondrial protein 1 (382 aa).

4 helical membrane-spanning segments follow: residues 1–21 (MSIS…FVAF), 30–50 (AFGA…LLFC), 79–99 (HEGS…FFCY), and 117–137 (SLFF…LLRY).

The protein belongs to the CcmF/CycK/Ccl1/NrfE/CcsA family. As to quaternary structure, interacts with CCMFN2 and CCMH.

Its subcellular location is the mitochondrion inner membrane. In terms of biological role, forms a complex with CCMFC, CCMFN2 and CCMH that performs the assembly of heme with c-type apocytochromes in mitochondria. The chain is Cytochrome c biogenesis CcmF N-terminal-like mitochondrial protein 1 from Arabidopsis thaliana (Mouse-ear cress).